A 160-amino-acid polypeptide reads, in one-letter code: Large ribosomal subunit protein uL22c (160 aa).

Belongs to the universal ribosomal protein uL22 family. As to quaternary structure, part of the 50S ribosomal subunit.

It is found in the plastid. It localises to the chloroplast. This protein binds specifically to 23S rRNA. In terms of biological role, the globular domain of the protein is located near the polypeptide exit tunnel on the outside of the subunit, while an extended beta-hairpin is found that lines the wall of the exit tunnel in the center of the 70S ribosome. This is Large ribosomal subunit protein uL22c (rpl22) from Nasturtium officinale (Watercress).